A 156-amino-acid polypeptide reads, in one-letter code: Methylated-DNA--protein-cysteine methyltransferase (156 aa).

Catalysis depends on Cys120, which acts as the Nucleophile; methyl group acceptor.

This sequence belongs to the MGMT family.

It localises to the cytoplasm. The catalysed reaction is a 6-O-methyl-2'-deoxyguanosine in DNA + L-cysteinyl-[protein] = S-methyl-L-cysteinyl-[protein] + a 2'-deoxyguanosine in DNA. It catalyses the reaction a 4-O-methyl-thymidine in DNA + L-cysteinyl-[protein] = a thymidine in DNA + S-methyl-L-cysteinyl-[protein]. Involved in the cellular defense against the biological effects of O6-methylguanine (O6-MeG) and O4-methylthymine (O4-MeT) in DNA. Repairs the methylated nucleobase in DNA by stoichiometrically transferring the methyl group to a cysteine residue in the enzyme. This is a suicide reaction: the enzyme is irreversibly inactivated. The polypeptide is Methylated-DNA--protein-cysteine methyltransferase (Metallosphaera sedula (strain ATCC 51363 / DSM 5348 / JCM 9185 / NBRC 15509 / TH2)).